The following is a 138-amino-acid chain: Large ribosomal subunit protein bL17 (138 aa).

Belongs to the bacterial ribosomal protein bL17 family. As to quaternary structure, part of the 50S ribosomal subunit. Contacts protein L32.

The sequence is that of Large ribosomal subunit protein bL17 from Methylorubrum populi (strain ATCC BAA-705 / NCIMB 13946 / BJ001) (Methylobacterium populi).